The chain runs to 640 residues: Chaperone protein DnaK (640 aa).

The residue at position 199 (Thr199) is a Phosphothreonine; by autocatalysis. A disordered region spans residues 603–640 (YAAGETESSAAEPGEPQEKTVDAEVVDAEFEEVKDDKK). The span at 626–640 (EVVDAEFEEVKDDKK) shows a compositional bias: acidic residues.

Belongs to the heat shock protein 70 family.

Acts as a chaperone. The sequence is that of Chaperone protein DnaK from Methylobacillus flagellatus (strain ATCC 51484 / DSM 6875 / VKM B-1610 / KT).